We begin with the raw amino-acid sequence, 7705 residues long: Copine family protein 2 (7705 aa).

9 disordered regions span residues 1-61 (MNDY…RHSE), 269-360 (KEGN…NNSQ), 372-408 (SERK…HQQP), 464-492 (GDRA…TSSV), 506-538 (STEP…TADG), 560-614 (DERA…QGPP), 1301-1358 (NRSE…DQQV), 4381-4427 (ELEP…RSES), and 6779-6800 (RDEH…GKFT). Residues 12-25 (SSQKSNNQKISNNS) show a composition bias toward low complexity. Residues 269 to 282 (KEGNNPSCCRERGT) are compositionally biased toward basic and acidic residues. Positions 302–313 (STSTKVAVTSAS) are enriched in low complexity. Positions 318–336 (IKDHKKQLKKEKEKKKKMD) are enriched in basic residues. Residues 372–404 (SERKTAKQREQELLQRSERRSGGRTHSHEEYRR) show a composition bias toward basic and acidic residues. Polar residues predominate over residues 522–532 (ASLSSVQQKQP). Residues 560-587 (DERAKDFLRGDRSSRLSPQSERKNERQI) are compositionally biased toward basic and acidic residues. Residues 588–597 (QIRQQSSGPT) are compositionally biased toward polar residues. Composition is skewed to basic and acidic residues over residues 598–611 (NRRE…EKRQ) and 1301–1335 (NRSE…HTSE). Residues 4397–4409 (RQSRVYRSSSQVR) show a composition bias toward low complexity. 2 stretches are compositionally biased toward basic and acidic residues: residues 4411–4427 (PSEE…RSES) and 6779–6797 (RDEH…RDGG). A VWFA domain is found at 7475-7673 (NLIFGIDYTK…FHKVMFNAPN (199 aa)).

This sequence belongs to the copine family. In terms of tissue distribution, expressed in body wall muscle.

The protein is Copine family protein 2 (cpna-2) of Caenorhabditis elegans.